The following is a 642-amino-acid chain: 1,4-alpha-glucan branching enzyme GlgB (642 aa).

The active-site Nucleophile is Asp304. Glu355 (proton donor) is an active-site residue.

The protein belongs to the glycosyl hydrolase 13 family. GlgB subfamily. As to quaternary structure, monomer.

The enzyme catalyses Transfers a segment of a (1-&gt;4)-alpha-D-glucan chain to a primary hydroxy group in a similar glucan chain.. It participates in glycan biosynthesis; glycogen biosynthesis. Catalyzes the formation of the alpha-1,6-glucosidic linkages in glycogen by scission of a 1,4-alpha-linked oligosaccharide from growing alpha-1,4-glucan chains and the subsequent attachment of the oligosaccharide to the alpha-1,6 position. The sequence is that of 1,4-alpha-glucan branching enzyme GlgB from Streptococcus pneumoniae serotype 4 (strain ATCC BAA-334 / TIGR4).